Here is a 409-residue protein sequence, read N- to C-terminus: Outer membrane protein assembly factor BamB (409 aa).

Positions 1-34 are cleaved as a signal peptide; the sequence is MAGNILLLILDYVFHAGSRTLRVCILSLLILLSG. Residue Cys35 is the site of N-palmitoyl cysteine attachment. Cys35 carries S-diacylglycerol cysteine lipidation.

It belongs to the BamB family. Part of the Bam complex.

It localises to the cell outer membrane. In terms of biological role, part of the outer membrane protein assembly complex, which is involved in assembly and insertion of beta-barrel proteins into the outer membrane. This chain is Outer membrane protein assembly factor BamB, found in Nitrosomonas eutropha (strain DSM 101675 / C91 / Nm57).